The primary structure comprises 527 residues: uncharacterized protein (527 aa).

Positions 1-93 (MSYMIAVPDM…AGAYASAEAT (93 aa)) constitute a PE domain. Composition is skewed to gly residues over residues 264–286 (IHGH…GVQG), 292–384 (GAAG…AGNG), and 472–515 (NGGD…GGSR). 2 disordered regions span residues 264 to 384 (IHGH…AGNG) and 472 to 527 (NGGD…TPGQ).

It belongs to the mycobacterial PE family. PGRS subfamily.

This is an uncharacterized protein from Mycobacterium tuberculosis (strain CDC 1551 / Oshkosh).